We begin with the raw amino-acid sequence, 235 residues long: Putative quercetin 2,3-dioxygenase ZMO1337 (235 aa).

Residues His-57, His-59, His-101, and Glu-103 each coordinate a divalent metal cation.

This sequence belongs to the pirin family. A divalent metal cation is required as a cofactor.

It catalyses the reaction quercetin + O2 = 2-(3,4-dihydroxybenzoyloxy)-4,6-dihydroxybenzoate + CO. It functions in the pathway flavonoid metabolism; quercetin degradation. Putative quercetin 2,3-dioxygenase. This Zymomonas mobilis subsp. mobilis (strain ATCC 31821 / ZM4 / CP4) protein is Putative quercetin 2,3-dioxygenase ZMO1337.